Reading from the N-terminus, the 192-residue chain is Ion-translocating oxidoreductase complex subunit B (192 aa).

The segment at 1 to 26 (MTAIWIAIAALSALALAFGLVLGYAS) is hydrophobic. A 4Fe-4S domain is found at 32–91 (ENDPIVEEVEAMLPQSQCGQCGYPGCRPYAEAVSLNGESINKCGPGGEAMMLKLAEKLNV). Positions 49, 52, 57, 74, 117, 120, 123, 127, 147, 150, 153, and 157 each coordinate [4Fe-4S] cluster. 4Fe-4S ferredoxin-type domains follow at residues 108-137 (HVAWIDESNCIGCTKCIQACPVDAIIGSTK) and 138-167 (AVHTVVSDLCTGCDLCISPCPTDCIELRPI).

It belongs to the 4Fe4S bacterial-type ferredoxin family. RnfB subfamily. As to quaternary structure, the complex is composed of six subunits: RnfA, RnfB, RnfC, RnfD, RnfE and RnfG. The cofactor is [4Fe-4S] cluster.

It is found in the cell inner membrane. In terms of biological role, part of a membrane-bound complex that couples electron transfer with translocation of ions across the membrane. The sequence is that of Ion-translocating oxidoreductase complex subunit B from Pectobacterium atrosepticum (strain SCRI 1043 / ATCC BAA-672) (Erwinia carotovora subsp. atroseptica).